The sequence spans 184 residues: ATP synthase subunit b, chloroplastic (184 aa).

The chain crosses the membrane as a helical span at residues 29-49; sequence TNLINLGVVLGLLVYFGKGVL.

This sequence belongs to the ATPase B chain family. In terms of assembly, F-type ATPases have 2 components, F(1) - the catalytic core - and F(0) - the membrane proton channel. F(1) has five subunits: alpha(3), beta(3), gamma(1), delta(1), epsilon(1). F(0) has four main subunits: a(1), b(1), b'(1) and c(10-14). The alpha and beta chains form an alternating ring which encloses part of the gamma chain. F(1) is attached to F(0) by a central stalk formed by the gamma and epsilon chains, while a peripheral stalk is formed by the delta, b and b' chains.

It localises to the plastid. Its subcellular location is the chloroplast thylakoid membrane. In terms of biological role, f(1)F(0) ATP synthase produces ATP from ADP in the presence of a proton or sodium gradient. F-type ATPases consist of two structural domains, F(1) containing the extramembraneous catalytic core and F(0) containing the membrane proton channel, linked together by a central stalk and a peripheral stalk. During catalysis, ATP synthesis in the catalytic domain of F(1) is coupled via a rotary mechanism of the central stalk subunits to proton translocation. Its function is as follows. Component of the F(0) channel, it forms part of the peripheral stalk, linking F(1) to F(0). This Anthoceros angustus (Hornwort) protein is ATP synthase subunit b, chloroplastic.